A 365-amino-acid chain; its full sequence is tRNA N6-adenosine threonylcarbamoyltransferase (365 aa).

Fe cation is bound by residues His111 and His115. Residues 140–144 (IVSGG), Asp173, Gly186, and Asn298 each bind substrate. Residue Asp323 participates in Fe cation binding.

It belongs to the KAE1 / TsaD family. Requires Fe(2+) as cofactor.

The protein localises to the cytoplasm. It catalyses the reaction L-threonylcarbamoyladenylate + adenosine(37) in tRNA = N(6)-L-threonylcarbamoyladenosine(37) in tRNA + AMP + H(+). Functionally, required for the formation of a threonylcarbamoyl group on adenosine at position 37 (t(6)A37) in tRNAs that read codons beginning with adenine. Is involved in the transfer of the threonylcarbamoyl moiety of threonylcarbamoyl-AMP (TC-AMP) to the N6 group of A37, together with TsaE and TsaB. TsaD likely plays a direct catalytic role in this reaction. This chain is tRNA N6-adenosine threonylcarbamoyltransferase, found in Thermomicrobium roseum (strain ATCC 27502 / DSM 5159 / P-2).